A 343-amino-acid chain; its full sequence is S-adenosylmethionine:tRNA ribosyltransferase-isomerase (343 aa).

The protein belongs to the QueA family. As to quaternary structure, monomer.

The protein localises to the cytoplasm. It catalyses the reaction 7-aminomethyl-7-carbaguanosine(34) in tRNA + S-adenosyl-L-methionine = epoxyqueuosine(34) in tRNA + adenine + L-methionine + 2 H(+). Its pathway is tRNA modification; tRNA-queuosine biosynthesis. Transfers and isomerizes the ribose moiety from AdoMet to the 7-aminomethyl group of 7-deazaguanine (preQ1-tRNA) to give epoxyqueuosine (oQ-tRNA). The chain is S-adenosylmethionine:tRNA ribosyltransferase-isomerase from Borreliella burgdorferi (strain ATCC 35210 / DSM 4680 / CIP 102532 / B31) (Borrelia burgdorferi).